Consider the following 452-residue polypeptide: tRNA modification GTPase MnmE (452 aa).

Residues R21, E82, and R121 each coordinate (6S)-5-formyl-5,6,7,8-tetrahydrofolate. A TrmE-type G domain is found at 217–373 (GINTTIIGKP…LENKIIEMFN (157 aa)). Residue N227 coordinates K(+). GTP contacts are provided by residues 227–232 (NVGKSS), 246–252 (TDIPGTT), and 271–274 (DTAG). S231 serves as a coordination point for Mg(2+). Positions 246, 248, and 251 each coordinate K(+). T252 is a Mg(2+) binding site. K452 contacts (6S)-5-formyl-5,6,7,8-tetrahydrofolate.

It belongs to the TRAFAC class TrmE-Era-EngA-EngB-Septin-like GTPase superfamily. TrmE GTPase family. As to quaternary structure, homodimer. Heterotetramer of two MnmE and two MnmG subunits. It depends on K(+) as a cofactor.

It is found in the cytoplasm. In terms of biological role, exhibits a very high intrinsic GTPase hydrolysis rate. Involved in the addition of a carboxymethylaminomethyl (cmnm) group at the wobble position (U34) of certain tRNAs, forming tRNA-cmnm(5)s(2)U34. This is tRNA modification GTPase MnmE from Finegoldia magna (strain ATCC 29328 / DSM 20472 / WAL 2508) (Peptostreptococcus magnus).